A 365-amino-acid chain; its full sequence is Chorismate synthase (365 aa).

Residues Arg48 and Arg54 each contribute to the NADP(+) site. FMN-binding positions include Arg131 to Ser133, Asn243 to Ala244, Gly288, Lys303 to Ser307, and Arg329.

This sequence belongs to the chorismate synthase family. As to quaternary structure, homotetramer. FMNH2 is required as a cofactor.

The catalysed reaction is 5-O-(1-carboxyvinyl)-3-phosphoshikimate = chorismate + phosphate. It functions in the pathway metabolic intermediate biosynthesis; chorismate biosynthesis; chorismate from D-erythrose 4-phosphate and phosphoenolpyruvate: step 7/7. Functionally, catalyzes the anti-1,4-elimination of the C-3 phosphate and the C-6 proR hydrogen from 5-enolpyruvylshikimate-3-phosphate (EPSP) to yield chorismate, which is the branch point compound that serves as the starting substrate for the three terminal pathways of aromatic amino acid biosynthesis. This reaction introduces a second double bond into the aromatic ring system. This chain is Chorismate synthase, found in Rhizobium leguminosarum bv. trifolii (strain WSM2304).